The chain runs to 252 residues: Large ribosomal subunit protein uL4 (252 aa).

The protein belongs to the universal ribosomal protein uL4 family. In terms of assembly, part of the 50S ribosomal subunit.

Functionally, one of the primary rRNA binding proteins, this protein initially binds near the 5'-end of the 23S rRNA. It is important during the early stages of 50S assembly. It makes multiple contacts with different domains of the 23S rRNA in the assembled 50S subunit and ribosome. Forms part of the polypeptide exit tunnel. This chain is Large ribosomal subunit protein uL4, found in Methanococcus maripaludis (strain C6 / ATCC BAA-1332).